Consider the following 469-residue polypeptide: Ribonuclease Y (469 aa).

A helical membrane pass occupies residues 6–26 (VTLILVGVIIFLFISLFFYVI). Residues 149-209 (FSFTIKLENE…IRREKAKRTM (61 aa)) form the KH domain. Positions 276 to 369 (VLLHCVEAAV…VKVVDKLSAS (94 aa)) constitute an HD domain.

It belongs to the RNase Y family.

It is found in the cell membrane. Its function is as follows. Endoribonuclease that initiates mRNA decay. The polypeptide is Ribonuclease Y (Malacoplasma penetrans (strain HF-2) (Mycoplasma penetrans)).